We begin with the raw amino-acid sequence, 121 residues long: MYVRRFYSDWFSGFSMFKNFNSSSFGLDSIIFFKYNRCFISSLEKSLNCIESSSFGTTTLVSSFKSHNFLKLLLLEADLLLLLLSLLLTWKYIKEAMSLTILSSLLPFWDPFDTNLSIKLS.

This is an uncharacterized protein from Saccharomyces cerevisiae (strain ATCC 204508 / S288c) (Baker's yeast).